Consider the following 512-residue polypeptide: Glutathione-binding protein GsiB (512 aa).

A signal peptide spans 1–26 (MTQFITHKWLAALGLASSIAAFPALA).

It belongs to the bacterial solute-binding protein 5 family. The complex is composed of two ATP-binding proteins (GsiA), two transmembrane proteins (GsiC and GsiD) and a solute-binding protein (GsiB).

It localises to the periplasm. Functionally, part of the ABC transporter complex GsiABCD involved in glutathione import. Binds glutathione. This is Glutathione-binding protein GsiB from Salmonella typhi.